The primary structure comprises 158 residues: NAD(P)H-quinone oxidoreductase subunit J, chloroplastic (158 aa).

The protein belongs to the complex I 30 kDa subunit family. In terms of assembly, NDH is composed of at least 16 different subunits, 5 of which are encoded in the nucleus.

Its subcellular location is the plastid. It localises to the chloroplast thylakoid membrane. It catalyses the reaction a plastoquinone + NADH + (n+1) H(+)(in) = a plastoquinol + NAD(+) + n H(+)(out). It carries out the reaction a plastoquinone + NADPH + (n+1) H(+)(in) = a plastoquinol + NADP(+) + n H(+)(out). In terms of biological role, NDH shuttles electrons from NAD(P)H:plastoquinone, via FMN and iron-sulfur (Fe-S) centers, to quinones in the photosynthetic chain and possibly in a chloroplast respiratory chain. The immediate electron acceptor for the enzyme in this species is believed to be plastoquinone. Couples the redox reaction to proton translocation, and thus conserves the redox energy in a proton gradient. The protein is NAD(P)H-quinone oxidoreductase subunit J, chloroplastic of Cucumis sativus (Cucumber).